Reading from the N-terminus, the 463-residue chain is Fumarate hydratase class II (463 aa).

Substrate contacts are provided by residues 95–97, 126–129, 136–138, and threonine 184; these read SGT, HPND, and SSN. Catalysis depends on histidine 185, which acts as the Proton donor/acceptor. The active site involves serine 315. Substrate is bound by residues serine 316 and 321–323; that span reads KIN.

This sequence belongs to the class-II fumarase/aspartase family. Fumarase subfamily. In terms of assembly, homotetramer.

It localises to the cytoplasm. The catalysed reaction is (S)-malate = fumarate + H2O. The protein operates within carbohydrate metabolism; tricarboxylic acid cycle; (S)-malate from fumarate: step 1/1. Its function is as follows. Involved in the TCA cycle. Catalyzes the stereospecific interconversion of fumarate to L-malate. This chain is Fumarate hydratase class II, found in Chlamydia trachomatis serovar D (strain ATCC VR-885 / DSM 19411 / UW-3/Cx).